A 137-amino-acid chain; its full sequence is Putative FERT-1 protein (137 aa).

The polypeptide is Putative FERT-1 protein (FERT-1) (Ascaris suum (Pig roundworm)).